We begin with the raw amino-acid sequence, 213 residues long: Orotate phosphoribosyltransferase (213 aa).

Lys26 contributes to the 5-phospho-alpha-D-ribose 1-diphosphate binding site. 34–35 (FF) lines the orotate pocket. 5-phospho-alpha-D-ribose 1-diphosphate is bound by residues 72-73 (YK), Arg99, Lys100, Lys103, His105, and 124-132 (DDVITAGTA). Residues Thr128 and Arg156 each contribute to the orotate site.

It belongs to the purine/pyrimidine phosphoribosyltransferase family. PyrE subfamily. As to quaternary structure, homodimer. Mg(2+) is required as a cofactor.

The enzyme catalyses orotidine 5'-phosphate + diphosphate = orotate + 5-phospho-alpha-D-ribose 1-diphosphate. The protein operates within pyrimidine metabolism; UMP biosynthesis via de novo pathway; UMP from orotate: step 1/2. Catalyzes the transfer of a ribosyl phosphate group from 5-phosphoribose 1-diphosphate to orotate, leading to the formation of orotidine monophosphate (OMP). This chain is Orotate phosphoribosyltransferase, found in Shigella sonnei (strain Ss046).